The primary structure comprises 444 residues: Ribulose bisphosphate carboxylase large chain (444 aa).

Lysine 7 bears the N6,N6,N6-trimethyllysine mark. Asparagine 116 and threonine 166 together coordinate substrate. Catalysis depends on lysine 168, which acts as the Proton acceptor. Substrate is bound at residue lysine 170. 3 residues coordinate Mg(2+): lysine 194, aspartate 196, and glutamate 197. Position 194 is an N6-carboxylysine (lysine 194). Histidine 287 acts as the Proton acceptor in catalysis. Substrate is bound by residues arginine 288, histidine 320, and serine 372.

The protein belongs to the RuBisCO large chain family. Type I subfamily. In terms of assembly, heterohexadecamer of 8 large chains and 8 small chains; disulfide-linked. The disulfide link is formed within the large subunit homodimers. Mg(2+) serves as cofactor. The disulfide bond which can form in the large chain dimeric partners within the hexadecamer appears to be associated with oxidative stress and protein turnover.

The protein resides in the plastid. It localises to the chloroplast. The catalysed reaction is 2 (2R)-3-phosphoglycerate + 2 H(+) = D-ribulose 1,5-bisphosphate + CO2 + H2O. The enzyme catalyses D-ribulose 1,5-bisphosphate + O2 = 2-phosphoglycolate + (2R)-3-phosphoglycerate + 2 H(+). Functionally, ruBisCO catalyzes two reactions: the carboxylation of D-ribulose 1,5-bisphosphate, the primary event in carbon dioxide fixation, as well as the oxidative fragmentation of the pentose substrate in the photorespiration process. Both reactions occur simultaneously and in competition at the same active site. The chain is Ribulose bisphosphate carboxylase large chain from Watsonia angusta.